Reading from the N-terminus, the 148-residue chain is Nucleoside diphosphate kinase (148 aa).

ATP contacts are provided by Lys9, Phe57, Arg85, Thr91, Arg102, and Asn112. The residue at position 91 (Thr91) is a Phosphothreonine. His115 acts as the Pros-phosphohistidine intermediate in catalysis. At Ser122 the chain carries Phosphoserine.

It belongs to the NDK family. In terms of assembly, homotetramer. The cofactor is Mg(2+).

It localises to the cytoplasm. The catalysed reaction is a 2'-deoxyribonucleoside 5'-diphosphate + ATP = a 2'-deoxyribonucleoside 5'-triphosphate + ADP. It catalyses the reaction a ribonucleoside 5'-diphosphate + ATP = a ribonucleoside 5'-triphosphate + ADP. Major role in the synthesis of nucleoside triphosphates other than ATP. The ATP gamma phosphate is transferred to the NDP beta phosphate via a ping-pong mechanism, using a phosphorylated active-site intermediate. The sequence is that of Nucleoside diphosphate kinase from Bacillus cereus (strain ATCC 14579 / DSM 31 / CCUG 7414 / JCM 2152 / NBRC 15305 / NCIMB 9373 / NCTC 2599 / NRRL B-3711).